A 195-amino-acid polypeptide reads, in one-letter code: Protein GrpE (195 aa).

The protein belongs to the GrpE family. In terms of assembly, homodimer.

The protein resides in the cytoplasm. Its function is as follows. Participates actively in the response to hyperosmotic and heat shock by preventing the aggregation of stress-denatured proteins, in association with DnaK and GrpE. It is the nucleotide exchange factor for DnaK and may function as a thermosensor. Unfolded proteins bind initially to DnaJ; upon interaction with the DnaJ-bound protein, DnaK hydrolyzes its bound ATP, resulting in the formation of a stable complex. GrpE releases ADP from DnaK; ATP binding to DnaK triggers the release of the substrate protein, thus completing the reaction cycle. Several rounds of ATP-dependent interactions between DnaJ, DnaK and GrpE are required for fully efficient folding. This Francisella tularensis subsp. novicida (strain U112) protein is Protein GrpE.